The chain runs to 458 residues: Ammonium transporter Rh type B (458 aa).

Topologically, residues 1-13 (MAKSPRRVAGRRL) are cytoplasmic. A helical transmembrane segment spans residues 14 to 34 (LLPLLCLFFQGATAILFAIFV). Residues 35 to 61 (RYDQQTDAALWHGGNHSNADNEFYFRY) are Extracellular-facing. N-linked (GlcNAc...) asparagine glycosylation occurs at asparagine 49. The chain crosses the membrane as a helical span at residues 62–82 (PSFQDVHAMVFVGFGFLMVFL). Over 83 to 86 (QRYG) the chain is Cytoplasmic. The helical transmembrane segment at 87-107 (YSSLGFTFLLGAFALQWATLV) threads the bilayer. Residues 108-124 (QGFLHSFHGGHIHVGME) are Extracellular-facing. A helical transmembrane segment spans residues 125-145 (SLINADFCAGAVLISFGAVLG). Residues 146–149 (KTGP) lie on the Cytoplasmic side of the membrane. The helical transmembrane segment at 150–170 (AQLLLMALLEVALFGLNEFVL) threads the bilayer. Over 171–178 (LCLLGVRD) the chain is Extracellular. The helical transmembrane segment at 179–201 (AGGSMTIHTFGAYFGLVLSRVLY) threads the bilayer. Residues 202 to 219 (RPHLEKSQHRQGSVYHSD) lie on the Cytoplasmic side of the membrane. The chain crosses the membrane as a helical span at residues 220–240 (LFAMIGTIFLWIFWPSFNSAL). Residues 241 to 251 (TSRGDGQPRTA) lie on the Extracellular side of the membrane. Residues 252–272 (LNTYYSLTASTLSTFALSALV) form a helical membrane-spanning segment. The Cytoplasmic portion of the chain corresponds to 273-282 (GKDGRLDMVH). The chain crosses the membrane as a helical span at residues 283–303 (VQNAALAGGVVVGTASEMMLT). A topological domain (extracellular) is located at residue proline 304. Residues 305–325 (FGALAAGCLAGAISTLGYKFF) form a helical membrane-spanning segment. Residues 326–346 (TPILESKLKIQDTCGVHNLHG) lie on the Cytoplasmic side of the membrane. The helical transmembrane segment at 347–367 (MPGVLGALLGALMTGLTTHEA) threads the bilayer. The Extracellular portion of the chain corresponds to 368–393 (YGDGLQSVFPLIAEGQRSATSQAIYQ). The chain crosses the membrane as a helical span at residues 394–414 (LFGLSVTLLFASAGGVLGGLL). Over 415-458 (LKLPFLDAPPDSQCYEDQMCWEVPGEHGYEAQEALRVEEPDTEA) the chain is Cytoplasmic. The interval 416 to 424 (KLPFLDAPP) is interaction with ANK3. The short motif at 429-432 (YEDQ) is the Basolateral sorting signal element.

Belongs to the ammonium transporter (TC 2.A.49) family. Rh subfamily. In terms of assembly, interacts (via C-terminus) with ANK2 and ANK3; required for targeting to the basolateral membrane. N-glycosylated.

The protein localises to the cell membrane. Its subcellular location is the basolateral cell membrane. It carries out the reaction NH4(+)(in) = NH4(+)(out). The enzyme catalyses methylamine(out) = methylamine(in). The catalysed reaction is CO2(out) = CO2(in). In terms of biological role, ammonium transporter involved in the maintenance of acid-base homeostasis. Transports ammonium and its related derivative methylammonium across the basolateral plasma membrane of epithelial cells likely contributing to renal transepithelial ammonia transport and ammonia metabolism. May transport either NH4(+) or NH3 ammonia species predominantly mediating an electrogenic NH4(+) transport. May act as a CO2 channel providing for renal acid secretion. The protein is Ammonium transporter Rh type B (RHBG) of Oryctolagus cuniculus (Rabbit).